Consider the following 95-residue polypeptide: Aspartyl/glutamyl-tRNA(Asn/Gln) amidotransferase subunit C (95 aa).

The protein belongs to the GatC family. As to quaternary structure, heterotrimer of A, B and C subunits.

The catalysed reaction is L-glutamyl-tRNA(Gln) + L-glutamine + ATP + H2O = L-glutaminyl-tRNA(Gln) + L-glutamate + ADP + phosphate + H(+). It carries out the reaction L-aspartyl-tRNA(Asn) + L-glutamine + ATP + H2O = L-asparaginyl-tRNA(Asn) + L-glutamate + ADP + phosphate + 2 H(+). Allows the formation of correctly charged Asn-tRNA(Asn) or Gln-tRNA(Gln) through the transamidation of misacylated Asp-tRNA(Asn) or Glu-tRNA(Gln) in organisms which lack either or both of asparaginyl-tRNA or glutaminyl-tRNA synthetases. The reaction takes place in the presence of glutamine and ATP through an activated phospho-Asp-tRNA(Asn) or phospho-Glu-tRNA(Gln). The sequence is that of Aspartyl/glutamyl-tRNA(Asn/Gln) amidotransferase subunit C from Anaeromyxobacter sp. (strain Fw109-5).